Here is a 62-residue protein sequence, read N- to C-terminus: uncharacterized protein (62 aa).

This is an uncharacterized protein from Methanocaldococcus jannaschii (strain ATCC 43067 / DSM 2661 / JAL-1 / JCM 10045 / NBRC 100440) (Methanococcus jannaschii).